A 517-amino-acid polypeptide reads, in one-letter code: Lysophosphatidylcholine acyltransferase 1 (517 aa).

Residues 1-52 (MRFPNRKLHTAVNGGDSGVSTHFRNPFVHELRFTTLQKLKIAVMTVTLFPVR) lie on the Cytoplasmic side of the membrane. A helical; Signal-anchor for type II membrane protein transmembrane segment spans residues 53–73 (LLFAAFMMLLAWPFAFVATVG). Residues 74–517 (RSENAVEPLS…SPRNHSKKQD (444 aa)) are Lumenal-facing. An HXXXXD motif motif is present at residues 129–134 (HSSYFD). N207 is a glycosylation site (N-linked (GlcNAc...) asparagine). The region spanning 443-478 (VGDLAVSELFRAIDSQDKGKITFDELCSFMEKCPDL) is the EF-hand domain. N511 carries N-linked (GlcNAc...) asparagine glycosylation. Positions 514 to 517 (KKQD) match the Di-lysine motif motif.

This sequence belongs to the 1-acyl-sn-glycerol-3-phosphate acyltransferase family.

The protein localises to the endoplasmic reticulum membrane. It localises to the golgi apparatus membrane. The protein resides in the cell membrane. Its subcellular location is the lipid droplet. It catalyses the reaction a 1-acyl-sn-glycero-3-phosphocholine + an acyl-CoA = a 1,2-diacyl-sn-glycero-3-phosphocholine + CoA. The enzyme catalyses a 1-O-alkyl-sn-glycero-3-phosphocholine + acetyl-CoA = a 1-O-alkyl-2-acetyl-sn-glycero-3-phosphocholine + CoA. The catalysed reaction is a 1-acyl-sn-glycero-3-phosphate + an acyl-CoA = a 1,2-diacyl-sn-glycero-3-phosphate + CoA. It carries out the reaction a 1-O-(1Z-alkenyl)-sn-glycero-3-phosphocholine + an acyl-CoA = a 1-O-(1Z-alkenyl)-2-acyl-sn-glycero-3-phosphocholine + CoA. It catalyses the reaction 1-acyl-sn-glycero-3-phospho-(1'-sn-glycerol) + an acyl-CoA = a 1,2-diacyl-sn-glycero-3-phospho-(1'-sn-glycerol) + CoA. The enzyme catalyses 1-hexadecanoyl-sn-glycero-3-phosphocholine + hexadecanoyl-CoA = 1,2-dihexadecanoyl-sn-glycero-3-phosphocholine + CoA. The catalysed reaction is 1-O-hexadecyl-sn-glycero-3-phosphocholine + hexadecanoyl-CoA = 1-O-hexadecyl-2-hexadecanoyl-sn-glycero-3-phosphocholine + CoA. It carries out the reaction a 1-O-(1Z-alkenyl)-sn-glycero-3-phosphocholine + hexadecanoyl-CoA = 1-O-(1Z)-alkenyl-2-hexadecanoyl-sn-glycero-3-phosphocholine + CoA. It catalyses the reaction 1-hexadecanoyl-sn-glycero-3-phospho-(1'-sn-glycerol) + hexadecanoyl-CoA = 1,2-dihexadecanoyl-sn-glycero-3-phospho-(1'-sn-glycerol) + CoA. The enzyme catalyses 1-dodecanoyl-sn-glycero-3-phosphocholine + hexadecanoyl-CoA = 1-dodecanoyl-2-hexadecanoyl-sn-glycero-3-phosphocholine + CoA. The catalysed reaction is 1-tetradecanoyl-sn-glycero-3-phosphocholine + hexadecanoyl-CoA = 1-tetradecanoyl-2-hexadecanoyl-sn-glycero-3-phosphocholine + CoA. It carries out the reaction 1-O-octadecyl-sn-glycero-3-phosphocholine + hexadecanoyl-CoA = 1-O-octadecyl-2-hexadecanoyl-sn-glycero-3-phosphocholine + CoA. It catalyses the reaction 1-octadecanoyl-sn-glycero-3-phosphocholine + hexadecanoyl-CoA = 1-octadecanoyl-2-hexadecanoyl-sn-glycero-3-phosphocholine + CoA. The enzyme catalyses 1-(9Z-octadecenoyl)-sn-glycero-3-phosphocholine + hexadecanoyl-CoA = 1-(9Z-octadecenoyl)-2-hexadecanoyl-sn-glycero-3-phosphocholine + CoA. The catalysed reaction is 1-eicosanoyl-sn-glycero-3-phosphocholine + hexadecanoyl-CoA = 1-eicosanoyl-2-hexadecanoyl-sn-glycero-3-phosphocholine + CoA. It carries out the reaction hexanoyl-CoA + 1-hexadecanoyl-sn-glycero-3-phosphocholine = 1-hexadecanoyl-2-hexanoyl-sn-glycero-3-phosphocholine + CoA. It catalyses the reaction octanoyl-CoA + 1-hexadecanoyl-sn-glycero-3-phosphocholine = 1-hexadecanoyl-2-octanoyl-sn-glycero-3-phosphocholine + CoA. The enzyme catalyses decanoyl-CoA + 1-hexadecanoyl-sn-glycero-3-phosphocholine = 1-hexadecanoyl-2-decanoyl-sn-glycero-3-phosphocholine + CoA. The catalysed reaction is dodecanoyl-CoA + 1-hexadecanoyl-sn-glycero-3-phosphocholine = 1-hexadecanoyl-2-dodecanoyl-sn-glycero-3-phosphocholine + CoA. It carries out the reaction tetradecanoyl-CoA + 1-hexadecanoyl-sn-glycero-3-phosphocholine = 1-hexadecanoyl-2-tetradecanoyl-sn-glycero-3-phosphocholine + CoA. It catalyses the reaction 1-hexadecanoyl-sn-glycero-3-phosphocholine + (9Z)-octadecenoyl-CoA = 1-hexadecanoyl-2-(9Z-octadecenoyl)-sn-glycero-3-phosphocholine + CoA. The enzyme catalyses (9Z,12Z)-octadecadienoyl-CoA + 1-hexadecanoyl-sn-glycero-3-phosphocholine = 1-hexadecanoyl-2-(9Z,12Z-octadecadienoyl)-sn-glycero-3-phosphocholine + CoA. The catalysed reaction is (4Z,7Z,10Z,13Z,16Z,19Z)-docosahexaenoyl-CoA + 1-hexadecanoyl-sn-glycero-3-phosphocholine = 1-hexadecanoyl-2-(4Z,7Z,10Z,13Z,16Z,19Z-docosahexaenoyl)-sn-glycero-3-phosphocholine + CoA. It carries out the reaction 1-hexadecanoyl-sn-glycero-3-phosphocholine + acetyl-CoA = 1-hexadecanoyl-2-acetyl-sn-glycero-3-phosphocholine + CoA. It catalyses the reaction eicosanoyl-CoA + 1-hexadecanoyl-sn-glycero-3-phosphocholine = 1-hexadecanoyl-2-eicosanoyl-sn-glycero-3-phosphocholine + CoA. The enzyme catalyses 1-O-hexadecyl-sn-glycero-3-phosphocholine + acetyl-CoA = 1-O-hexadecyl-2-acetyl-sn-glycero-3-phosphocholine + CoA. The catalysed reaction is a 1-acyl-sn-glycero-3-phosphocholine + hexadecanoyl-CoA = 1-acyl-2-hexadecanoyl-sn-glycero-3-phosphocholine + CoA. It carries out the reaction a 1-acyl-sn-glycero-3-phosphate + hexadecanoyl-CoA = 1-acyl-2-hexadecanoyl-sn-glycero-3-phosphate + CoA. It catalyses the reaction 1-acyl-sn-glycero-3-phospho-(1'-sn-glycerol) + hexadecanoyl-CoA = 1-acyl-2-hexadecanoyl-sn-glycero-3-phospho-(1'-sn-glycerol) + CoA. It participates in lipid metabolism; phospholipid metabolism. Exhibits both acyltransferase and acetyltransferase activities. Activity is calcium-independent. Catalyzes the conversion of lysophosphatidylcholine (1-acyl-sn-glycero-3-phosphocholine or LPC) into phosphatidylcholine (1,2-diacyl-sn-glycero-3-phosphocholine or PC). Catalyzes the conversion 1-acyl-sn-glycerol-3-phosphate (lysophosphatidic acid or LPA) into 1,2-diacyl-sn-glycerol-3-phosphate (phosphatidic acid or PA) by incorporating an acyl moiety at the sn-2 position of the glycerol backbone. This chain is Lysophosphatidylcholine acyltransferase 1 (lpcat1), found in Danio rerio (Zebrafish).